The sequence spans 470 residues: Protein C-ets-2 (470 aa).

Residues 85–170 (ATFSGFKKEQ…EHLEQMIKEN (86 aa)) form the PNT domain. The residue at position 225 (serine 225) is a Phosphoserine. Residues 270-291 (ASGKPRDHDSAETGGDSFESSE) form a disordered region. Phosphoserine is present on residues serine 296, serine 299, and serine 302. A DNA-binding region (ETS) is located at residues 364–444 (IQLWQFLLEL…SGKRYVYRFV (81 aa)).

It belongs to the ETS family. In terms of processing, phosphorylation by CDK10 at Ser-225 may create a phosphodegron that targets ETS2 for proteasomal degradation.

It localises to the nucleus. Its function is as follows. Transcription factor activating transcription. Binds specifically the GGA DNA motif in gene promoters and stimulates transcription of those genes. In Bos taurus (Bovine), this protein is Protein C-ets-2 (ETS2).